The sequence spans 667 residues: MVDKIERIKELVEILNKYSYDYYVLDNPSVSDKDYDKEYDELKLLEKETGFVLPYSPTLRIGDVVLQGFNKYTHKGKLWSLDKAQSLDEIKDWHNRNIKFVNEMRAQGEDLPDLKYIATKKFDGLTVNLTYNKGGMLEVSATRGNGEIGENVTSQVKTIKSIPLKLQENDDLFEVHGEAIMTQEAFEKYNASADIPLKNLRNGAAGALRNLNIKETARRDLSAFFYDVGYKEGYQFKTYLEMMDFIKEKGLPIDEYLKVCTSIDDIKKEIEYIEKIRFDLNYDIDGLVIAIDDIRTRELLGYTVKYPKWAIAYKFEAQEATTKLLDVEWNVGRSGRIGPTAILEPVELAGVTVKRATLNNMDDIKRKGVRIGADVFVRRSNDVIPEIMGTLENTLENSEEICPPTECPACGSHVVLNGAHYFCENTLSCKPQLVKTIVHYASRDAMNIAGFSEKTAEQLFEKLNIKSISDLYKLKKEDLINLEKFGEKKSENLLNAIEKSKDCKLYSFIYALGIPNVGVKTAKDIVNKFKSIDGLKNATFEELVSVQDVGDIVAQDVIEFFKEEKVINTIDELLNLGVNPIFDEVKIVESIFKDKTVVTTGTLQNYSRTEIKTKLESLGAKVSGSVSKKTDYVIAGESAGSKLTKAEELGVKIISEEEFEKMLGRES.

NAD(+) is bound by residues 32–36 and 80–81; these read DKDYD and SL. Lysine 121 serves as the catalytic N6-AMP-lysine intermediate. Residues arginine 143, glutamate 178, and lysine 314 each coordinate NAD(+). Zn(2+)-binding residues include cysteine 407, cysteine 410, cysteine 423, and cysteine 429. A BRCT domain is found at 587–667; it reads IVESIFKDKT…EFEKMLGRES (81 aa).

It belongs to the NAD-dependent DNA ligase family. LigA subfamily. Mg(2+) is required as a cofactor. Requires Mn(2+) as cofactor.

The catalysed reaction is NAD(+) + (deoxyribonucleotide)n-3'-hydroxyl + 5'-phospho-(deoxyribonucleotide)m = (deoxyribonucleotide)n+m + AMP + beta-nicotinamide D-nucleotide.. DNA ligase that catalyzes the formation of phosphodiester linkages between 5'-phosphoryl and 3'-hydroxyl groups in double-stranded DNA using NAD as a coenzyme and as the energy source for the reaction. It is essential for DNA replication and repair of damaged DNA. This chain is DNA ligase, found in Clostridium botulinum (strain Eklund 17B / Type B).